Reading from the N-terminus, the 366-residue chain is 4-hydroxy-3-methylbut-2-en-1-yl diphosphate synthase (flavodoxin) (366 aa).

Cysteine 270, cysteine 273, cysteine 305, and glutamate 312 together coordinate [4Fe-4S] cluster.

Belongs to the IspG family. It depends on [4Fe-4S] cluster as a cofactor.

The enzyme catalyses (2E)-4-hydroxy-3-methylbut-2-enyl diphosphate + oxidized [flavodoxin] + H2O + 2 H(+) = 2-C-methyl-D-erythritol 2,4-cyclic diphosphate + reduced [flavodoxin]. Its pathway is isoprenoid biosynthesis; isopentenyl diphosphate biosynthesis via DXP pathway; isopentenyl diphosphate from 1-deoxy-D-xylulose 5-phosphate: step 5/6. Its function is as follows. Converts 2C-methyl-D-erythritol 2,4-cyclodiphosphate (ME-2,4cPP) into 1-hydroxy-2-methyl-2-(E)-butenyl 4-diphosphate. The protein is 4-hydroxy-3-methylbut-2-en-1-yl diphosphate synthase (flavodoxin) of Acidithiobacillus ferrooxidans (strain ATCC 53993 / BNL-5-31) (Leptospirillum ferrooxidans (ATCC 53993)).